Consider the following 180-residue polypeptide: NAD(P)H-quinone oxidoreductase subunit I, chloroplastic (180 aa).

2 4Fe-4S ferredoxin-type domains span residues 55–84 (GRIH…VDWR) and 95–124 (LNYS…MTEE). Positions 64, 67, 70, 74, 104, 107, 110, and 114 each coordinate [4Fe-4S] cluster.

The protein belongs to the complex I 23 kDa subunit family. As to quaternary structure, NDH is composed of at least 16 different subunits, 5 of which are encoded in the nucleus. Requires [4Fe-4S] cluster as cofactor.

Its subcellular location is the plastid. It is found in the chloroplast thylakoid membrane. It carries out the reaction a plastoquinone + NADH + (n+1) H(+)(in) = a plastoquinol + NAD(+) + n H(+)(out). The enzyme catalyses a plastoquinone + NADPH + (n+1) H(+)(in) = a plastoquinol + NADP(+) + n H(+)(out). In terms of biological role, NDH shuttles electrons from NAD(P)H:plastoquinone, via FMN and iron-sulfur (Fe-S) centers, to quinones in the photosynthetic chain and possibly in a chloroplast respiratory chain. The immediate electron acceptor for the enzyme in this species is believed to be plastoquinone. Couples the redox reaction to proton translocation, and thus conserves the redox energy in a proton gradient. This Drimys granadensis protein is NAD(P)H-quinone oxidoreductase subunit I, chloroplastic.